The following is a 289-amino-acid chain: Splicing factor C9orf78 (289 aa).

Positions Met1–Arg12 are enriched in basic residues. The interval Met1–Val27 is disordered. An interaction with SNRNP200 region spans residues Arg5–Val58. Phosphoserine occurs at positions 15 and 17. Tyr147 carries the phosphotyrosine modification. Residues Leu232–Lys283 are compositionally biased toward basic and acidic residues. The segment at Leu232–Tyr289 is disordered. The residue at position 253 (Thr253) is a Phosphothreonine. Phosphoserine is present on Ser261.

Belongs to the TLS1 family. In terms of assembly, component of the spliceosome. Interacts with SNRNP200; the interaction is direct. Interacts with PRPF8.

The protein resides in the nucleus. It is found in the chromosome. It localises to the centromere. Its function is as follows. Plays a role in pre-mRNA splicing by promoting usage of the upstream 3'-splice site at alternative NAGNAG splice sites; these are sites featuring alternative acceptor motifs separated by only a few nucleotides. May also modulate exon inclusion events. Plays a role in spliceosomal remodeling by displacing WBP4 from SNRNP200 and may act to inhibit SNRNP200 helicase activity. Binds U5 snRNA. Required for proper chromosome segregation. Not required for splicing of shelterin components. The protein is Splicing factor C9orf78 (C9orf78) of Homo sapiens (Human).